We begin with the raw amino-acid sequence, 344 residues long: Laforin, isoform 9 (344 aa).

Disordered stretches follow at residues 1–44, 58–134, 158–188, and 320–344; these read MHPK…PGPG, GGGA…PRGH, PAPG…RRAS, and SLKK…QCAT. Over residues 77 to 88 the composition is skewed to low complexity; that stretch reads AARAGALGAARC. The segment covering 101 to 131 has biased composition (gly residues); sequence RGPGPAGAGPVARGGGAGGRGGGAGRGGAGP. Residues 179 to 188 are compositionally biased toward basic residues; that stretch reads RPRRPRRRAS.

As to quaternary structure, interacts with isoform 1 and isoform 2.

It localises to the nucleus. The polypeptide is Laforin, isoform 9 (Homo sapiens (Human)).